A 1061-amino-acid polypeptide reads, in one-letter code: Atrial natriuretic peptide receptor 1 (1061 aa).

An N-terminal signal peptide occupies residues 1-32; the sequence is MPGPRRPAGSRLRLLLLLLLPPLLLLLRGSHA. Residues 33–473 lie on the Extracellular side of the membrane; it reads GNLTVAVVLP…CNQDHLSTLE (441 aa). Residues Asn-34 and Asn-45 are each glycosylated (N-linked (GlcNAc...) asparagine). Chloride contacts are provided by Ser-85, Gly-117, and Cys-118. 2 disulfides stabilise this stretch: Cys-92-Cys-118 and Cys-196-Cys-245. 5 N-linked (GlcNAc...) asparagine glycosylation sites follow: Asn-212, Asn-338, Asn-379, Asn-386, and Asn-427. Residues Cys-455 and Cys-464 are joined by a disulfide bond. The chain crosses the membrane as a helical span at residues 474–494; that stretch reads VLALVGSLSLLGILIVSFFIY. The Cytoplasmic segment spans residues 495 to 1061; it reads RKMQLEKELA…LGERGSSTRG (567 aa). 2 positions are modified to phosphoserine: Ser-519 and Ser-529. Residues 528–805 form the Protein kinase domain; the sequence is GSRLTLSGRG…QIRLTLRKFN (278 aa). Thr-532 is modified (phosphothreonine). Phosphoserine is present on residues Ser-534, Ser-538, and Ser-542. Thr-545 is modified (phosphothreonine). The region spanning 876 to 1006 is the Guanylate cyclase domain; that stretch reads TIYFSDIVGF…DTVNTASRME (131 aa).

This sequence belongs to the adenylyl cyclase class-4/guanylyl cyclase family. In terms of assembly, homodimer. Post-translationally, phosphorylation of the protein kinase-like domain is required for full activation by ANP.

It localises to the membrane. The catalysed reaction is GTP = 3',5'-cyclic GMP + diphosphate. Its function is as follows. Receptor for the atrial natriuretic peptide NPPA/ANP and the brain natriuretic peptide NPPB/BNP which are potent vasoactive hormones playing a key role in cardiovascular homeostasis. Plays an essential role in the regulation of endothelial cell senescence and vascular aging. Upon activation by ANP or BNP, stimulates the production of cyclic guanosine monophosphate (cGMP) that promotes vascular tone and volume homeostasis by activation of protein kinase cGMP-dependent 1/PRKG1 and subsequently PRKAA1, thereby controlling blood pressure and maintaining cardiovascular homeostasis. The polypeptide is Atrial natriuretic peptide receptor 1 (Homo sapiens (Human)).